A 194-amino-acid chain; its full sequence is dTTP/UTP pyrophosphatase (194 aa).

D73 (proton acceptor) is an active-site residue.

This sequence belongs to the Maf family. YhdE subfamily. A divalent metal cation is required as a cofactor.

The protein localises to the cytoplasm. The enzyme catalyses dTTP + H2O = dTMP + diphosphate + H(+). The catalysed reaction is UTP + H2O = UMP + diphosphate + H(+). Its function is as follows. Nucleoside triphosphate pyrophosphatase that hydrolyzes dTTP and UTP. May have a dual role in cell division arrest and in preventing the incorporation of modified nucleotides into cellular nucleic acids. The protein is dTTP/UTP pyrophosphatase of Clostridium botulinum (strain Kyoto / Type A2).